Consider the following 121-residue polypeptide: Large ribosomal subunit protein bL19 (121 aa).

It belongs to the bacterial ribosomal protein bL19 family.

In terms of biological role, this protein is located at the 30S-50S ribosomal subunit interface and may play a role in the structure and function of the aminoacyl-tRNA binding site. This Bifidobacterium adolescentis (strain ATCC 15703 / DSM 20083 / NCTC 11814 / E194a) protein is Large ribosomal subunit protein bL19.